The following is a 385-amino-acid chain: 1-deoxy-D-xylulose 5-phosphate reductoisomerase 1 (385 aa).

Positions 11, 12, 13, 14, 39, and 122 each coordinate NADPH. K123 provides a ligand contact to 1-deoxy-D-xylulose 5-phosphate. E124 contributes to the NADPH binding site. Mn(2+) is bound at residue D148. Positions 149, 150, 174, and 197 each coordinate 1-deoxy-D-xylulose 5-phosphate. A Mn(2+)-binding site is contributed by E150. G203 contributes to the NADPH binding site. The 1-deoxy-D-xylulose 5-phosphate site is built by S210, N215, K216, and E219. E219 lines the Mn(2+) pocket.

It belongs to the DXR family. Mg(2+) serves as cofactor. It depends on Mn(2+) as a cofactor.

It catalyses the reaction 2-C-methyl-D-erythritol 4-phosphate + NADP(+) = 1-deoxy-D-xylulose 5-phosphate + NADPH + H(+). It participates in isoprenoid biosynthesis; isopentenyl diphosphate biosynthesis via DXP pathway; isopentenyl diphosphate from 1-deoxy-D-xylulose 5-phosphate: step 1/6. In terms of biological role, catalyzes the NADPH-dependent rearrangement and reduction of 1-deoxy-D-xylulose-5-phosphate (DXP) to 2-C-methyl-D-erythritol 4-phosphate (MEP). The chain is 1-deoxy-D-xylulose 5-phosphate reductoisomerase 1 from Bacillus thuringiensis subsp. konkukian (strain 97-27).